The sequence spans 702 residues: Pseudouridylate synthase PUS7L (702 aa).

Ser79 is modified (phosphoserine). Residues 84-116 form a disordered region; that stretch reads NSEGAADLPGCSDGDRSHQSDSEKENSVNSVTS. Basic and acidic residues predominate over residues 96-109; that stretch reads DGDRSHQSDSEKEN. The Nucleophile role is filled by Asp339. The region spanning 424–646 is the TRUD domain; the sequence is GFVNYYGPQR…PGCYRHIVKH (223 aa).

Belongs to the pseudouridine synthase TruD family.

It carries out the reaction a uridine in mRNA = a pseudouridine in mRNA. In terms of biological role, pseudouridine synthase that catalyzes pseudouridylation of mRNAs. This chain is Pseudouridylate synthase PUS7L, found in Mus musculus (Mouse).